Consider the following 265-residue polypeptide: Aliphatic sulfonates import ATP-binding protein SsuB 1 (265 aa).

An ABC transporter domain is found at 31 to 255 (FAFKGVEKRF…RRGSAELARL (225 aa)). Residue 63-70 (GKSGCGKS) coordinates ATP.

This sequence belongs to the ABC transporter superfamily. Aliphatic sulfonates importer (TC 3.A.1.17.2) family. In terms of assembly, the complex is composed of two ATP-binding proteins (SsuB), two transmembrane proteins (SsuC) and a solute-binding protein (SsuA).

It is found in the cell inner membrane. The enzyme catalyses ATP + H2O + aliphatic sulfonate-[sulfonate-binding protein]Side 1 = ADP + phosphate + aliphatic sulfonateSide 2 + [sulfonate-binding protein]Side 1.. In terms of biological role, part of the ABC transporter complex SsuABC involved in aliphatic sulfonates import. Responsible for energy coupling to the transport system. The sequence is that of Aliphatic sulfonates import ATP-binding protein SsuB 1 from Mesorhizobium japonicum (strain LMG 29417 / CECT 9101 / MAFF 303099) (Mesorhizobium loti (strain MAFF 303099)).